The following is a 117-amino-acid chain: Aspartate 1-decarboxylase (117 aa).

The active-site Schiff-base intermediate with substrate; via pyruvic acid is S25. S25 is subject to Pyruvic acid (Ser). A substrate-binding site is contributed by T57. Y58 (proton donor) is an active-site residue. 73-75 is a substrate binding site; sequence GAA.

Belongs to the PanD family. Heterooctamer of four alpha and four beta subunits. It depends on pyruvate as a cofactor. Post-translationally, is synthesized initially as an inactive proenzyme, which is activated by self-cleavage at a specific serine bond to produce a beta-subunit with a hydroxyl group at its C-terminus and an alpha-subunit with a pyruvoyl group at its N-terminus.

The protein localises to the cytoplasm. It catalyses the reaction L-aspartate + H(+) = beta-alanine + CO2. The protein operates within cofactor biosynthesis; (R)-pantothenate biosynthesis; beta-alanine from L-aspartate: step 1/1. In terms of biological role, catalyzes the pyruvoyl-dependent decarboxylation of aspartate to produce beta-alanine. The chain is Aspartate 1-decarboxylase from Bacteroides fragilis (strain ATCC 25285 / DSM 2151 / CCUG 4856 / JCM 11019 / LMG 10263 / NCTC 9343 / Onslow / VPI 2553 / EN-2).